Consider the following 1170-residue polypeptide: Error-prone DNA polymerase (1170 aa).

Disordered stretches follow at residues 867–899 (RGARSANPESRDSGFALRAPRNDNDRQIPLHND) and 1129–1170 (IPHG…RDFH). Residues 886-899 (PRNDNDRQIPLHND) show a composition bias toward basic and acidic residues.

This sequence belongs to the DNA polymerase type-C family. DnaE2 subfamily.

The protein localises to the cytoplasm. It carries out the reaction DNA(n) + a 2'-deoxyribonucleoside 5'-triphosphate = DNA(n+1) + diphosphate. Its function is as follows. DNA polymerase involved in damage-induced mutagenesis and translesion synthesis (TLS). It is not the major replicative DNA polymerase. The polypeptide is Error-prone DNA polymerase (Bradyrhizobium sp. (strain ORS 278)).